The primary structure comprises 1067 residues: Glycine--tRNA ligase, chloroplastic/mitochondrial 2 (1067 aa).

Residues 1–50 (MAILHFSLPLIVSFLRPHASPRFFLLPRSLSQSPFLSRRRFHRTSAVSSA) constitute a chloroplast and mitochondrion transit peptide. E513 provides a ligand contact to substrate. Residues 589 to 596 (RNSGINIE), 619 to 624 (LVVPQN), 744 to 745 (RL), and 859 to 862 (GLRR) each bind ATP. Substrate is bound at residue 624–628 (NLLNE). Residue 855-859 (NDPFG) coordinates substrate.

Belongs to the class-II aminoacyl-tRNA synthetase family. Homodimer.

It localises to the plastid. The protein localises to the chloroplast. The protein resides in the mitochondrion. It catalyses the reaction tRNA(Gly) + glycine + ATP = glycyl-tRNA(Gly) + AMP + diphosphate. Functionally, catalyzes the attachment of glycine to tRNA(Gly). Is also able produce diadenosine tetraphosphate (Ap4A), a universal pleiotropic signaling molecule needed for cell regulation pathways, by direct condensation of 2 ATPs. The chain is Glycine--tRNA ligase, chloroplastic/mitochondrial 2 from Arabidopsis thaliana (Mouse-ear cress).